The following is a 177-amino-acid chain: Large ribosomal subunit protein uL6 (177 aa).

It belongs to the universal ribosomal protein uL6 family. In terms of assembly, part of the 50S ribosomal subunit.

This protein binds to the 23S rRNA, and is important in its secondary structure. It is located near the subunit interface in the base of the L7/L12 stalk, and near the tRNA binding site of the peptidyltransferase center. The protein is Large ribosomal subunit protein uL6 of Shewanella denitrificans (strain OS217 / ATCC BAA-1090 / DSM 15013).